The sequence spans 566 residues: Proline--tRNA ligase (566 aa).

The protein belongs to the class-II aminoacyl-tRNA synthetase family. ProS type 1 subfamily. In terms of assembly, homodimer.

Its subcellular location is the cytoplasm. It catalyses the reaction tRNA(Pro) + L-proline + ATP = L-prolyl-tRNA(Pro) + AMP + diphosphate. Functionally, catalyzes the attachment of proline to tRNA(Pro) in a two-step reaction: proline is first activated by ATP to form Pro-AMP and then transferred to the acceptor end of tRNA(Pro). As ProRS can inadvertently accommodate and process non-cognate amino acids such as alanine and cysteine, to avoid such errors it has two additional distinct editing activities against alanine. One activity is designated as 'pretransfer' editing and involves the tRNA(Pro)-independent hydrolysis of activated Ala-AMP. The other activity is designated 'posttransfer' editing and involves deacylation of mischarged Ala-tRNA(Pro). The misacylated Cys-tRNA(Pro) is not edited by ProRS. This chain is Proline--tRNA ligase, found in Bacillus mycoides (strain KBAB4) (Bacillus weihenstephanensis).